Consider the following 406-residue polypeptide: Propionate kinase (406 aa).

ATP-binding residues include Asn-11 and Lys-18. Mg(2+) is bound at residue Asn-11. Arg-86 serves as a coordination point for substrate. Asp-143 serves as the catalytic Proton donor/acceptor. Residues His-175, 203 to 207 (HLGNG), 278 to 280 (DMR), and 326 to 330 (GIGEN) each bind ATP.

It belongs to the acetokinase family. TdcD subfamily. As to quaternary structure, homodimer. Mg(2+) serves as cofactor.

The enzyme catalyses propanoate + ATP = propanoyl phosphate + ADP. Its pathway is amino-acid degradation; L-threonine degradation via propanoate pathway; propanoate from L-threonine: step 4/4. Catalyzes the conversion of propionyl phosphate and ADP to propionate and ATP. This chain is Propionate kinase, found in Yersinia enterocolitica serotype O:8 / biotype 1B (strain NCTC 13174 / 8081).